A 436-amino-acid chain; its full sequence is Serine--tRNA ligase (436 aa).

Threonine 239–glutamate 241 contacts L-serine. Arginine 270 to glutamate 272 provides a ligand contact to ATP. Residue glutamate 293 participates in L-serine binding. Glutamate 357–serine 360 serves as a coordination point for ATP. Position 392 (serine 392) interacts with L-serine.

Belongs to the class-II aminoacyl-tRNA synthetase family. Type-1 seryl-tRNA synthetase subfamily. Homodimer. The tRNA molecule binds across the dimer.

The protein resides in the cytoplasm. It carries out the reaction tRNA(Ser) + L-serine + ATP = L-seryl-tRNA(Ser) + AMP + diphosphate + H(+). It catalyses the reaction tRNA(Sec) + L-serine + ATP = L-seryl-tRNA(Sec) + AMP + diphosphate + H(+). Its pathway is aminoacyl-tRNA biosynthesis; selenocysteinyl-tRNA(Sec) biosynthesis; L-seryl-tRNA(Sec) from L-serine and tRNA(Sec): step 1/1. Its function is as follows. Catalyzes the attachment of serine to tRNA(Ser). Is also able to aminoacylate tRNA(Sec) with serine, to form the misacylated tRNA L-seryl-tRNA(Sec), which will be further converted into selenocysteinyl-tRNA(Sec). The polypeptide is Serine--tRNA ligase (Leuconostoc citreum (strain KM20)).